We begin with the raw amino-acid sequence, 70 residues long: Small ribosomal subunit protein bS21 (70 aa).

This sequence belongs to the bacterial ribosomal protein bS21 family.

This is Small ribosomal subunit protein bS21 from Helicobacter acinonychis (strain Sheeba).